The chain runs to 443 residues: MGFVSLGCPKALVDSEQIITQLRAEGYAISGTYDGADLVVVNTCGFIDEAVQESLDAIGEALTENGKVIVTGCLGAKKDAAGHDIVSSVHPKVLAVTGPHALGEVMQAVHTHLPKPHDPFTDLVPAAGIKLTPKHYAYLKISEGCNHRCSFCIIPSMRGDLVSRPVAEVMLEAENLFKAGVKELLVISQDTSAYGVDVKYRTGFWNGRPLKTRMTELVAALGELAAQYGAWVRLHYVYPYPHVDEIIPLMSQGHVLPYLDVPLQHAHPDVLKRMKRPANAEKTMDRIRAWREICPELTIRSTFIAGFPGETEAEFQTLLDFIAEAELDRVGCFAYSPVEGATANDLPGALPDEVREERRARFMEVAEEVSARRLQRKVGQTLRVLVDEVNQDGGIGRSSADAPEIDGLVYIAPPERHAQRYRAGEFVDVKITGADGHDLWGAV.

The 114-residue stretch at 1 to 114 folds into the MTTase N-terminal domain; it reads MGFVSLGCPK…VMQAVHTHLP (114 aa). [4Fe-4S] cluster is bound by residues Cys-8, Cys-44, Cys-73, Cys-145, Cys-149, and Cys-152. The 242-residue stretch at 131 to 372 folds into the Radical SAM core domain; it reads LTPKHYAYLK…MEVAEEVSAR (242 aa). The region spanning 375–443 is the TRAM domain; the sequence is QRKVGQTLRV…ADGHDLWGAV (69 aa).

This sequence belongs to the methylthiotransferase family. RimO subfamily. [4Fe-4S] cluster is required as a cofactor.

Its subcellular location is the cytoplasm. It catalyses the reaction L-aspartate(89)-[ribosomal protein uS12]-hydrogen + (sulfur carrier)-SH + AH2 + 2 S-adenosyl-L-methionine = 3-methylsulfanyl-L-aspartate(89)-[ribosomal protein uS12]-hydrogen + (sulfur carrier)-H + 5'-deoxyadenosine + L-methionine + A + S-adenosyl-L-homocysteine + 2 H(+). Functionally, catalyzes the methylthiolation of an aspartic acid residue of ribosomal protein uS12. The protein is Ribosomal protein uS12 methylthiotransferase RimO of Cupriavidus necator (strain ATCC 17699 / DSM 428 / KCTC 22496 / NCIMB 10442 / H16 / Stanier 337) (Ralstonia eutropha).